The primary structure comprises 192 residues: Sarcoplasmic calcium-binding protein, beta chain (192 aa).

Residue Ala1 is modified to N-acetylalanine. 4 EF-hand domains span residues Trp4–Ile39, Ile56–Gly91, Ala100–Phe135, and Ala136–Phe171. Residues Asp17, Asp19, Asp21, Asp28, Asp69, Asn71, Asp73, Glu75, Glu80, Asp113, Asp115, Asp117, Met119, and Glu124 each coordinate Ca(2+).

In terms of assembly, SCPs from crayfish, lobster, and shrimp are polymorphic dimers; three isotypes (alpha-alpha, alpha-beta, and beta-beta) have been identified.

Functionally, like parvalbumins, SCPs seem to be more abundant in fast contracting muscles, but no functional relationship can be established from this distribution. The sequence is that of Sarcoplasmic calcium-binding protein, beta chain from Penaeus sp. (Penoeid shrimp).